Consider the following 96-residue polypeptide: Ubiquitin-related modifier 1 (96 aa).

Gly96 is subject to 1-thioglycine. Gly96 is covalently cross-linked (Glycyl lysine isopeptide (Gly-Lys) (interchain with K-? in acceptor proteins)).

Belongs to the URM1 family. Post-translationally, C-terminal thiocarboxylation occurs in 2 steps, it is first acyl-adenylated (-COAMP) via the hesA/moeB/thiF part of UBA4, then thiocarboxylated (-COSH) via the rhodanese domain of UBA4.

The protein localises to the cytoplasm. It functions in the pathway tRNA modification; 5-methoxycarbonylmethyl-2-thiouridine-tRNA biosynthesis. In terms of biological role, acts as a sulfur carrier required for 2-thiolation of mcm(5)S(2)U at tRNA wobble positions of cytosolic tRNA(Lys), tRNA(Glu) and tRNA(Gln). Serves as sulfur donor in tRNA 2-thiolation reaction by being thiocarboxylated (-COSH) at its C-terminus by the MOCS3 homolog UBA4. The sulfur is then transferred to tRNA to form 2-thiolation of mcm(5)S(2)U. Prior mcm(5) tRNA modification by the elongator complex is required for 2-thiolation. Also acts as a ubiquitin-like protein (UBL) that is covalently conjugated via an isopeptide bond to lysine residues of target proteins such as AHP1. The thiocarboxylated form serves as substrate for conjugation and oxidative stress specifically induces the formation of UBL-protein conjugates. This is Ubiquitin-related modifier 1 from Encephalitozoon cuniculi (strain GB-M1) (Microsporidian parasite).